The chain runs to 291 residues: UDP-N-acetylenolpyruvoylglucosamine reductase (291 aa).

The 166-residue stretch at 22–187 (RIGGPARYFK…ASATFQLTKD (166 aa)) folds into the FAD-binding PCMH-type domain. Arginine 166 is a catalytic residue. The active-site Proton donor is the cysteine 214. Glutamate 283 is an active-site residue.

This sequence belongs to the MurB family. FAD serves as cofactor.

The protein localises to the cytoplasm. The enzyme catalyses UDP-N-acetyl-alpha-D-muramate + NADP(+) = UDP-N-acetyl-3-O-(1-carboxyvinyl)-alpha-D-glucosamine + NADPH + H(+). The protein operates within cell wall biogenesis; peptidoglycan biosynthesis. Its function is as follows. Cell wall formation. This is UDP-N-acetylenolpyruvoylglucosamine reductase from Chlamydia trachomatis serovar A (strain ATCC VR-571B / DSM 19440 / HAR-13).